Here is a 158-residue protein sequence, read N- to C-terminus: Endoribonuclease YbeY (158 aa).

Residues histidine 121, histidine 125, and histidine 131 each coordinate Zn(2+).

It belongs to the endoribonuclease YbeY family. Zn(2+) is required as a cofactor.

It is found in the cytoplasm. Single strand-specific metallo-endoribonuclease involved in late-stage 70S ribosome quality control and in maturation of the 3' terminus of the 16S rRNA. The polypeptide is Endoribonuclease YbeY (Exiguobacterium sp. (strain ATCC BAA-1283 / AT1b)).